Here is a 353-residue protein sequence, read N- to C-terminus: Cytochrome c biogenesis protein CcsA (353 aa).

8 helical membrane-spanning segments follow: residues 15–35 (FAIL…PNLP), 37–57 (LAAL…TLLG), 68–88 (LSNL…VHLI), 97–117 (LVGV…TMTL), 142–162 (VMML…AFLI), 261–281 (IIGL…VWAN), 288–308 (WSWD…AAYL), and 322–342 (AILA…VNLL).

It belongs to the CcmF/CycK/Ccl1/NrfE/CcsA family. In terms of assembly, may interact with ccs1.

It is found in the cellular thylakoid membrane. Functionally, required during biogenesis of c-type cytochromes (cytochrome c6 and cytochrome f) at the step of heme attachment. This Nostoc punctiforme (strain ATCC 29133 / PCC 73102) protein is Cytochrome c biogenesis protein CcsA.